We begin with the raw amino-acid sequence, 101 residues long: NADH-quinone oxidoreductase subunit K (101 aa).

3 consecutive transmembrane segments (helical) span residues 4–24, 29–49, and 61–81; these read LSDYLILSSVIFCIGLVGIFV, IITLLMCVELILVAVNTNFVA, and IFVFFILTVAAAEVAIGLAIL.

Belongs to the complex I subunit 4L family. In terms of assembly, NDH-1 is composed of 14 different subunits. Subunits NuoA, H, J, K, L, M, N constitute the membrane sector of the complex.

The protein resides in the cell inner membrane. It catalyses the reaction a quinone + NADH + 5 H(+)(in) = a quinol + NAD(+) + 4 H(+)(out). Its function is as follows. NDH-1 shuttles electrons from NADH, via FMN and iron-sulfur (Fe-S) centers, to quinones in the respiratory chain. The immediate electron acceptor for the enzyme in this species is believed to be ubiquinone. Couples the redox reaction to proton translocation (for every two electrons transferred, four hydrogen ions are translocated across the cytoplasmic membrane), and thus conserves the redox energy in a proton gradient. The chain is NADH-quinone oxidoreductase subunit K from Ruthia magnifica subsp. Calyptogena magnifica.